A 144-amino-acid polypeptide reads, in one-letter code: uncharacterized protein (144 aa).

One can recognise an N-acetyltransferase domain in the interval 2 to 144; that stretch reads IELDAINPNN…EDSVLLSKKL (143 aa).

The protein belongs to the acetyltransferase family.

The protein localises to the cytoplasm. It localises to the nucleus. This is an uncharacterized protein from Schizosaccharomyces pombe (strain 972 / ATCC 24843) (Fission yeast).